The primary structure comprises 649 residues: Protein PSK SIMULATOR 3 (649 aa).

Residue G2 is the site of N-myristoyl glycine attachment. Residues 18–43 form a disordered region; that stretch reads SGSSVADDGREPDFGHSQPNGQTSLI.

The protein localises to the nucleus. Its function is as follows. Promotes plant growth, especially at the vegetative stage, probably via the regulation of phytosulfokine (PSK) signaling; PSK are peptide phytohormones acting as growth factors. Together with PSI2 and PSI3, required during vegetative growth and reproduction. May also have a function in carbohydrate metabolism. The chain is Protein PSK SIMULATOR 3 from Arabidopsis thaliana (Mouse-ear cress).